A 284-amino-acid polypeptide reads, in one-letter code: Homeobox protein CDX-4 (284 aa).

Disordered stretches follow at residues 15-40 (PGTLMSPGGDGTAGTGGTGGGGSPMP) and 120-155 (GGGTSGSSLPGQAGGSLVPTDAGAAKASSPSRSRHS). Gly residues predominate over residues 22–37 (GGDGTAGTGGTGGGGS). The homeobox DNA-binding region spans 173–232 (KEKYRVVYTDHQRLELEKEFHCNRYITIQRKSELAVNLGLSERQVKIWFQNRRAKERKMI). The segment covering 238-253 (QFENSGGSVQSDSDSI) has biased composition (polar residues). A disordered region spans residues 238 to 259 (QFENSGGSVQSDSDSISPGELP).

Belongs to the Caudal homeobox family.

The protein resides in the nucleus. This is Homeobox protein CDX-4 (CDX4) from Homo sapiens (Human).